The chain runs to 310 residues: Prephenate dehydratase (310 aa).

A Prephenate dehydratase domain is found at 3–190 (RIAYLGPEGT…ARTRFVLVGL (188 aa)). The ACT domain maps to 204-281 (AVVLRLVNEP…VDVRYLGSWP (78 aa)).

Homodimer.

It carries out the reaction prephenate + H(+) = 3-phenylpyruvate + CO2 + H2O. It participates in amino-acid biosynthesis; L-phenylalanine biosynthesis; phenylpyruvate from prephenate: step 1/1. In Mycolicibacterium smegmatis (strain ATCC 700084 / mc(2)155) (Mycobacterium smegmatis), this protein is Prephenate dehydratase (pheA).